The chain runs to 97 residues: Aspartyl/glutamyl-tRNA(Asn/Gln) amidotransferase subunit C (97 aa).

This sequence belongs to the GatC family. Heterotrimer of A, B and C subunits.

The catalysed reaction is L-glutamyl-tRNA(Gln) + L-glutamine + ATP + H2O = L-glutaminyl-tRNA(Gln) + L-glutamate + ADP + phosphate + H(+). The enzyme catalyses L-aspartyl-tRNA(Asn) + L-glutamine + ATP + H2O = L-asparaginyl-tRNA(Asn) + L-glutamate + ADP + phosphate + 2 H(+). Its function is as follows. Allows the formation of correctly charged Asn-tRNA(Asn) or Gln-tRNA(Gln) through the transamidation of misacylated Asp-tRNA(Asn) or Glu-tRNA(Gln) in organisms which lack either or both of asparaginyl-tRNA or glutaminyl-tRNA synthetases. The reaction takes place in the presence of glutamine and ATP through an activated phospho-Asp-tRNA(Asn) or phospho-Glu-tRNA(Gln). This is Aspartyl/glutamyl-tRNA(Asn/Gln) amidotransferase subunit C from Roseiflexus sp. (strain RS-1).